A 170-amino-acid polypeptide reads, in one-letter code: dCTP pyrophosphatase 1 (170 aa).

Residues 1–27 (MSVAGGEIRGDTGGEDTAAPGRFSFSP) form a disordered region. S2 is subject to N-acetylserine. The residue at position 2 (S2) is a Phosphoserine. The residue at position 12 (T12) is a Phosphothreonine. Residues H38 and 47-51 (WEQFH) contribute to the substrate site. Residues E63 and E66 each coordinate Mg(2+). Residue W73 coordinates substrate. The residue at position 85 (S85) is a Phosphoserine. Residues E95 and D98 each contribute to the Mg(2+) site. Substrate is bound at residue Y102. Positions 147–170 (GAISEDQAVGPADIPCDSTGQTST) are disordered.

Homotetramer. Requires Mg(2+) as cofactor.

Its subcellular location is the mitochondrion. It is found in the nucleus. The protein localises to the cytoplasm. The protein resides in the cytosol. The catalysed reaction is dCTP + H2O = dCMP + diphosphate + H(+). With respect to regulation, inhibited by the reaction end product PPi. Inhibited by dCDP. Inhibited by triptolide. Functionally, hydrolyzes deoxynucleoside triphosphates (dNTPs) to the corresponding nucleoside monophosphates. Has a strong preference for dCTP and its analogs including 5-iodo-dCTP and 5-methyl-dCTP for which it may even have a higher efficiency. May protect DNA or RNA against the incorporation of these genotoxic nucleotide analogs through their catabolism. The sequence is that of dCTP pyrophosphatase 1 from Homo sapiens (Human).